Reading from the N-terminus, the 646-residue chain is Elongation factor 4 (646 aa).

In terms of domain architecture, tr-type G spans 42–227 (AQIRNFCIIA…EVVRRVPHPQ (186 aa)). Residues 54-59 (DHGKST) and 174-177 (NKID) contribute to the GTP site.

This sequence belongs to the TRAFAC class translation factor GTPase superfamily. Classic translation factor GTPase family. LepA subfamily.

The protein localises to the cell membrane. It carries out the reaction GTP + H2O = GDP + phosphate + H(+). Required for accurate and efficient protein synthesis under certain stress conditions. May act as a fidelity factor of the translation reaction, by catalyzing a one-codon backward translocation of tRNAs on improperly translocated ribosomes. Back-translocation proceeds from a post-translocation (POST) complex to a pre-translocation (PRE) complex, thus giving elongation factor G a second chance to translocate the tRNAs correctly. Binds to ribosomes in a GTP-dependent manner. This is Elongation factor 4 from Mycobacterium leprae (strain Br4923).